A 313-amino-acid polypeptide reads, in one-letter code: Holliday junction branch migration complex subunit RuvB (313 aa).

Residues 1-157 (MNEYIGQGNI…FGLIMELDFY (157 aa)) form a large ATPase domain (RuvB-L) region. Residues G38, K41, T42, T43, 104–106 (EDF), R147, Y157, and R194 contribute to the ATP site. Residue T42 coordinates Mg(2+). A small ATPAse domain (RuvB-S) region spans residues 158 to 228 (SIDELSKIIE…MVEEIMFLLG (71 aa)). The interval 231-313 (KEGLDELDRK…KVQRGLFDEE (83 aa)) is head domain (RuvB-H). 2 residues coordinate DNA: R286 and R291.

The protein belongs to the RuvB family. Homohexamer. Forms an RuvA(8)-RuvB(12)-Holliday junction (HJ) complex. HJ DNA is sandwiched between 2 RuvA tetramers; dsDNA enters through RuvA and exits via RuvB. An RuvB hexamer assembles on each DNA strand where it exits the tetramer. Each RuvB hexamer is contacted by two RuvA subunits (via domain III) on 2 adjacent RuvB subunits; this complex drives branch migration. In the full resolvosome a probable DNA-RuvA(4)-RuvB(12)-RuvC(2) complex forms which resolves the HJ.

Its subcellular location is the cytoplasm. It catalyses the reaction ATP + H2O = ADP + phosphate + H(+). In terms of biological role, the RuvA-RuvB-RuvC complex processes Holliday junction (HJ) DNA during genetic recombination and DNA repair, while the RuvA-RuvB complex plays an important role in the rescue of blocked DNA replication forks via replication fork reversal (RFR). RuvA specifically binds to HJ cruciform DNA, conferring on it an open structure. The RuvB hexamer acts as an ATP-dependent pump, pulling dsDNA into and through the RuvAB complex. RuvB forms 2 homohexamers on either side of HJ DNA bound by 1 or 2 RuvA tetramers; 4 subunits per hexamer contact DNA at a time. Coordinated motions by a converter formed by DNA-disengaged RuvB subunits stimulates ATP hydrolysis and nucleotide exchange. Immobilization of the converter enables RuvB to convert the ATP-contained energy into a lever motion, pulling 2 nucleotides of DNA out of the RuvA tetramer per ATP hydrolyzed, thus driving DNA branch migration. The RuvB motors rotate together with the DNA substrate, which together with the progressing nucleotide cycle form the mechanistic basis for DNA recombination by continuous HJ branch migration. Branch migration allows RuvC to scan DNA until it finds its consensus sequence, where it cleaves and resolves cruciform DNA. In Thermosipho melanesiensis (strain DSM 12029 / CIP 104789 / BI429), this protein is Holliday junction branch migration complex subunit RuvB.